The chain runs to 1483 residues: Mediator of RNA polymerase II transcription subunit 26 (1483 aa).

The TFIIS N-terminal domain maps to 8 to 85 (ELTTHLSQAL…KKWREMVGIQ (78 aa)). 3 positions are modified to phosphoserine: serine 204, serine 258, and serine 421. Disordered stretches follow at residues 227–278 (SDSD…GQVA), 414–438 (HEYLESDSPSQIPKRRGRKKGSKGV), 480–518 (VSMQSSASNLSNSSTNRDLPSHTTFPRQTSSCSDTSMNS), 541–575 (TDSDTVTSDPSHDSNKSQEIKECTSLDSNSNSIQS), and 989–1041 (DKSS…MKRR). Positions 426 to 435 (PKRRGRKKGS) are enriched in basic residues. The segment covering 480 to 495 (VSMQSSASNLSNSSTN) has biased composition (low complexity). Over residues 496–518 (RDLPSHTTFPRQTSSCSDTSMNS) the composition is skewed to polar residues. Phosphothreonine is present on threonine 541. Basic and acidic residues predominate over residues 550–564 (PSHDSNKSQEIKECT). Serine 551 carries the phosphoserine modification. 2 stretches are compositionally biased toward polar residues: residues 565–575 (SLDSNSNSIQS) and 989–999 (DKSSNTGCQGN). Low complexity predominate over residues 1000 to 1011 (SPYSSSSSSSYS). Over residues 1020-1033 (ITKNLQNKNIQLNS) the composition is skewed to polar residues. Serine 1177 carries the phosphoserine modification. Position 1179 is a phosphothreonine (threonine 1179).

This sequence belongs to the Mediator complex subunit 26 family. As to quaternary structure, component of the Mediator complex. Interacts with MED6 and MED17.

The protein localises to the nucleus. Functionally, component of the Mediator complex, a coactivator involved in the regulated transcription of nearly all RNA polymerase II-dependent genes. Mediator functions as a bridge to convey information from gene-specific regulatory proteins to the basal RNA polymerase II transcription machinery. Mediator is recruited to promoters by direct interactions with regulatory proteins and serves as a scaffold for the assembly of a functional preinitiation complex with RNA polymerase II and the general transcription factors. Required for activated transcription of the MtnA gene. The chain is Mediator of RNA polymerase II transcription subunit 26 (MED26) from Drosophila melanogaster (Fruit fly).